The chain runs to 156 residues: Small ribosomal subunit protein uS7 (156 aa).

Belongs to the universal ribosomal protein uS7 family. As to quaternary structure, part of the 30S ribosomal subunit. Contacts proteins S9 and S11.

Its function is as follows. One of the primary rRNA binding proteins, it binds directly to 16S rRNA where it nucleates assembly of the head domain of the 30S subunit. Is located at the subunit interface close to the decoding center, probably blocks exit of the E-site tRNA. This is Small ribosomal subunit protein uS7 from Mycobacterium sp. (strain JLS).